Reading from the N-terminus, the 673-residue chain is Probable multidrug resistance ABC transporter ATP-binding/permease protein YheH (673 aa).

Transmembrane regions (helical) follow at residues 18 to 38, 146 to 166, 223 to 243, 245 to 265, and 347 to 367; these read LITA…GPFI, IKGM…SVFF, LYVT…GIFT, LFLL…IIWL, and LAFV…AGIV. Residues 18–398 form the ABC transmembrane type-1 domain; the sequence is LITAVLLLTV…IVNQFSKLEL (381 aa). The region spanning 430 to 664 is the ABC transporter domain; it reads VEFRDVSFAY…EGQYYQMYEL (235 aa). An ATP-binding site is contributed by 463–470; it reads GHTGSGKS.

The protein belongs to the ABC transporter superfamily. In terms of assembly, heterodimer composed of YheH and YheI.

The protein resides in the cell membrane. With respect to regulation, inhibited by ortho-vanadate. In terms of biological role, involved in the transport of four structurally unrelated drugs, including doxorubicin and mitoxantrone. Transmembrane domains (TMD) form a pore in the membrane and the ATP-binding domain (NBD) is responsible for energy generation. In Bacillus subtilis (strain 168), this protein is Probable multidrug resistance ABC transporter ATP-binding/permease protein YheH (yheH).